The sequence spans 302 residues: Acetaldehyde dehydrogenase (302 aa).

Residue 12 to 15 (SGNI) participates in NAD(+) binding. The Acyl-thioester intermediate role is filled by Cys-127. NAD(+)-binding positions include 158–166 (SAGPGTRQN) and Asn-276.

Belongs to the acetaldehyde dehydrogenase family.

It catalyses the reaction acetaldehyde + NAD(+) + CoA = acetyl-CoA + NADH + H(+). In Geobacillus genomosp. 3, this protein is Acetaldehyde dehydrogenase (nahO).